Here is a 399-residue protein sequence, read N- to C-terminus: Acetate kinase (399 aa).

Residue Asn7 participates in Mg(2+) binding. Lys14 is a binding site for ATP. Position 91 (Arg91) interacts with substrate. Asp148 serves as the catalytic Proton donor/acceptor. ATP-binding positions include 208-212 (HLGNG), 283-285 (DFR), and 331-335 (GLGEN). Residue Glu384 coordinates Mg(2+).

This sequence belongs to the acetokinase family. As to quaternary structure, homodimer. Mg(2+) serves as cofactor. It depends on Mn(2+) as a cofactor.

It localises to the cytoplasm. The catalysed reaction is acetate + ATP = acetyl phosphate + ADP. It functions in the pathway metabolic intermediate biosynthesis; acetyl-CoA biosynthesis; acetyl-CoA from acetate: step 1/2. Its function is as follows. Catalyzes the formation of acetyl phosphate from acetate and ATP. Can also catalyze the reverse reaction. The chain is Acetate kinase from Desulfitobacterium hafniense (strain Y51).